Here is a 932-residue protein sequence, read N- to C-terminus: Glycine dehydrogenase (decarboxylating) (932 aa).

An N6-(pyridoxal phosphate)lysine modification is found at Lys-685.

The protein belongs to the GcvP family. As to quaternary structure, the glycine cleavage system is composed of four proteins: P, T, L and H. Pyridoxal 5'-phosphate serves as cofactor.

It catalyses the reaction N(6)-[(R)-lipoyl]-L-lysyl-[glycine-cleavage complex H protein] + glycine + H(+) = N(6)-[(R)-S(8)-aminomethyldihydrolipoyl]-L-lysyl-[glycine-cleavage complex H protein] + CO2. The glycine cleavage system catalyzes the degradation of glycine. The P protein binds the alpha-amino group of glycine through its pyridoxal phosphate cofactor; CO(2) is released and the remaining methylamine moiety is then transferred to the lipoamide cofactor of the H protein. This is Glycine dehydrogenase (decarboxylating) from Brucella abortus (strain S19).